A 416-amino-acid chain; its full sequence is E3 ubiquitin-protein ligase RNFT1 (416 aa).

Polar residues predominate over residues 27–45; that stretch reads QSSSGHTHHQPGSNDSPSV. Disordered stretches follow at residues 27–50 and 63–116; these read QSSS…MSLP and GDVT…ADSR. Positions 77 to 86 are enriched in basic residues; that stretch reads GARSSSRRVR. Transmembrane regions (helical) follow at residues 146-166, 184-204, 214-234, 237-257, 265-287, and 302-322; these read LVVQ…TFLY, LQCL…YYTF, VFMN…VVGI, FIGK…PSFV, YWYM…PVWF, and WHFG…IIFG. Residues 349-400 form a required for ubiquitin ligase activity and for protection against ER stress-induced cell death region; that stretch reads CSEVDGMCAICQAEFIKPIVLVCQHVFCEECISLWFNKEKTCPLCRTVISNQ. Residues 356–394 form an RING-type zinc finger; that stretch reads CAICQAEFIKPIVLVCQHVFCEECISLWFNKEKTCPLCR.

The protein localises to the endoplasmic reticulum membrane. It catalyses the reaction S-ubiquitinyl-[E2 ubiquitin-conjugating enzyme]-L-cysteine + [acceptor protein]-L-lysine = [E2 ubiquitin-conjugating enzyme]-L-cysteine + N(6)-ubiquitinyl-[acceptor protein]-L-lysine.. The protein operates within protein modification; protein ubiquitination. In terms of biological role, E3 ubiquitin-protein ligase that acts in the endoplasmic reticulum (ER)-associated degradation (ERAD) pathway, which targets misfolded proteins that accumulate in the endoplasmic reticulum (ER) for ubiquitination and subsequent proteasome-mediated degradation. Protects cells from ER stress-induced apoptosis. This chain is E3 ubiquitin-protein ligase RNFT1 (rnft1), found in Xenopus tropicalis (Western clawed frog).